A 182-amino-acid polypeptide reads, in one-letter code: Malignant T-cell-amplified sequence 1 homolog (182 aa).

The region spanning 93–172 (VTMQQVDKGA…IGIETYHFLN (80 aa)) is the PUA domain.

The protein belongs to the MCTS1 family. In terms of assembly, interacts with DENR.

The protein localises to the cytoplasm. In terms of biological role, regulates translation as part of a complex with DENR. Specifically required for translational re-initiation in mRNAs containing upstream open reading frames (uORFs). Not required for standard translational initiation. Regulates expression of a subset of gene products including mbc, InR and EcR. The sequence is that of Malignant T-cell-amplified sequence 1 homolog from Drosophila melanogaster (Fruit fly).